We begin with the raw amino-acid sequence, 193 residues long: Thioredoxin M4, chloroplastic (193 aa).

A chloroplast-targeting transit peptide spans 1–82; the sequence is MASLLDSVTV…RIACEAQDTT (82 aa). One can recognise a Thioredoxin domain in the interval 83–192; the sequence is AAAVEVPNLS…LEKTIERFLV (110 aa). Catalysis depends on nucleophile residues cysteine 116 and cysteine 119. An intrachain disulfide couples cysteine 116 to cysteine 119.

Belongs to the thioredoxin family. Plant M-type subfamily.

The protein localises to the plastid. It localises to the chloroplast stroma. Functionally, thiol-disulfide oxidoreductase involved in the redox regulation of enzyme of the oxidative pentose phosphate pathway. Under reducing conditions, inhibits the glucose-6-phosphate dehydrogenase. The polypeptide is Thioredoxin M4, chloroplastic (Arabidopsis thaliana (Mouse-ear cress)).